Here is a 560-residue protein sequence, read N- to C-terminus: Protein NRT1/ PTR FAMILY 2.5 (560 aa).

Residues 1-20 (MADSKSGDTEVAHRSSDPSE) are disordered. 12 helical membrane passes run 34–54 (TLLGMSITSFGWGMNLIVFLI), 77–97 (MLPVVAAILADSFFGNIPVIS), 101–121 (FISLAGTSLLTLITSLNYLMP), 141–161 (ILYVALALVIIGSAGTRFTLA), 177–197 (FFNWFFLALYIGAITGTTAIV), 207–227 (LGFGLCAVANLISFIVFIAGV), 323–343 (AILRLVPLWAAVMFLSTPVAV), 372–392 (VIVLVFGCVFIMLNNWIIYPM), 404–424 (LQQVGIGHVFTILSMAISAVV), 441–461 (VLWLVPALVMVGIGEAFHFPA), 480–500 (SLTSVVIGISFYLSTAVIDVI), and 520–540 (YWVVVIGGVLNLGYFLVCSWF).

Belongs to the major facilitator superfamily. Proton-dependent oligopeptide transporter (POT/PTR) (TC 2.A.17) family. Expressed in the root epidermis or cortex.

The protein localises to the membrane. Transporter involved in a passive nitrate efflux. The protein is Protein NRT1/ PTR FAMILY 2.5 (NPF2.5) of Arabidopsis thaliana (Mouse-ear cress).